A 363-amino-acid chain; its full sequence is RNA exonuclease NGL1 (363 aa).

The N-terminal 23 residues, 1-23, are a transit peptide targeting the mitochondrion; that stretch reads MFTRRFIPVVQSTKQNIGKYVRK.

Belongs to the CCR4/nocturin family.

Its subcellular location is the mitochondrion. The chain is RNA exonuclease NGL1 (NGL1) from Saccharomyces cerevisiae (strain ATCC 204508 / S288c) (Baker's yeast).